We begin with the raw amino-acid sequence, 40 residues long: Photosystem II reaction center protein J (40 aa).

The chain crosses the membrane as a helical span at residues 8–28 (IPLWIIGTVTGIIVIGLIGIF).

It belongs to the PsbJ family. As to quaternary structure, PSII is composed of 1 copy each of membrane proteins PsbA, PsbB, PsbC, PsbD, PsbE, PsbF, PsbH, PsbI, PsbJ, PsbK, PsbL, PsbM, PsbT, PsbX, PsbY, PsbZ, Psb30/Ycf12, at least 3 peripheral proteins of the oxygen-evolving complex and a large number of cofactors. It forms dimeric complexes.

Its subcellular location is the plastid. It is found in the chloroplast thylakoid membrane. Its function is as follows. One of the components of the core complex of photosystem II (PSII). PSII is a light-driven water:plastoquinone oxidoreductase that uses light energy to abstract electrons from H(2)O, generating O(2) and a proton gradient subsequently used for ATP formation. It consists of a core antenna complex that captures photons, and an electron transfer chain that converts photonic excitation into a charge separation. The sequence is that of Photosystem II reaction center protein J from Morus indica (Mulberry).